Consider the following 1894-residue polypeptide: Plexin-A2 (1894 aa).

The first 34 residues, 1-34 (MEQRRPWPRALEVDSRSVVLLSVVWVLLAPPAAG), serve as a signal peptide directing secretion. The Sema domain occupies 35–508 (MPQFSTFHSE…SERQVTRVPV (474 aa)). At 35–1237 (MPQFSTFHSE…VISDSLLTLP (1203 aa)) the chain is on the extracellular side. N-linked (GlcNAc...) asparagine glycans are attached at residues N76 and N91. 10 disulfide bridges follow: C94/C103, C129/C137, C284/C405, C300/C356, C374/C393, C511/C528, C517/C559, C520/C537, C531/C543, and C594/C613. N327 is a glycosylation site (N-linked (GlcNAc...) asparagine). Residues N598, N696, and N756 are each glycosylated (N-linked (GlcNAc...) asparagine). IPT/TIG domains are found at residues 858-951 (PQIT…QYTF), 954-1037 (PSVL…QFEY), 1041-1139 (PRVQ…KFIY), and 1143-1228 (PTFE…SVSV). A glycan (N-linked (GlcNAc...) asparagine) is linked at N1205. The helical transmembrane segment at 1238 to 1258 (AIVSIAAGGSLLLIIVIIVLI) threads the bilayer. Residues 1259 to 1894 (AYKRKSREND…QLINAMSIES (636 aa)) lie on the Cytoplasmic side of the membrane. A coiled-coil region spans residues 1261–1310 (KRKSRENDLTLKRLQMQMDNLESRVALECKEAFAELQTDINELTSDLDRS). S1612 carries the post-translational modification Phosphoserine.

This sequence belongs to the plexin family. In terms of assembly, homodimer. The PLXNA2 homodimer interacts with a SEMA6A homodimer, giving rise to a heterotetramer. Interacts directly with NRP1 and NRP2. Interacts with RND1. As to expression, detected in fetal brain.

The protein resides in the cell membrane. Its function is as follows. Coreceptor for SEMA3A and SEMA6A. Necessary for signaling by SEMA6A and class 3 semaphorins and subsequent remodeling of the cytoskeleton. Plays a role in axon guidance, invasive growth and cell migration. Class 3 semaphorins bind to a complex composed of a neuropilin and a plexin. The plexin modulates the affinity of the complex for specific semaphorins, and its cytoplasmic domain is required for the activation of down-stream signaling events in the cytoplasm. The sequence is that of Plexin-A2 (PLXNA2) from Homo sapiens (Human).